A 108-amino-acid chain; its full sequence is uncharacterized protein (108 aa).

This is an uncharacterized protein from Escherichia coli (Bacteriophage N4).